The chain runs to 127 residues: Small ribosomal subunit protein uS13 (127 aa).

Residues 92–127 (HRQGLPVRGQRTRTNARTRRGRRLTVAGKKKAPSKK) form a disordered region. Residues 101–127 (QRTRTNARTRRGRRLTVAGKKKAPSKK) show a composition bias toward basic residues.

The protein belongs to the universal ribosomal protein uS13 family. As to quaternary structure, part of the 30S ribosomal subunit. Forms a loose heterodimer with protein S19. Forms two bridges to the 50S subunit in the 70S ribosome.

In terms of biological role, located at the top of the head of the 30S subunit, it contacts several helices of the 16S rRNA. In the 70S ribosome it contacts the 23S rRNA (bridge B1a) and protein L5 of the 50S subunit (bridge B1b), connecting the 2 subunits; these bridges are implicated in subunit movement. Contacts the tRNAs in the A and P-sites. The protein is Small ribosomal subunit protein uS13 of Gloeothece citriformis (strain PCC 7424) (Cyanothece sp. (strain PCC 7424)).